A 311-amino-acid chain; its full sequence is Ribosomal RNA small subunit methyltransferase H (311 aa).

Residues 33–35, aspartate 51, phenylalanine 78, aspartate 99, and glutamine 106 contribute to the S-adenosyl-L-methionine site; that span reads GGH. The interval 289–311 is disordered; that stretch reads EEIEKNRRAHSAKLRAAEKLSFA.

Belongs to the methyltransferase superfamily. RsmH family.

It is found in the cytoplasm. It carries out the reaction cytidine(1402) in 16S rRNA + S-adenosyl-L-methionine = N(4)-methylcytidine(1402) in 16S rRNA + S-adenosyl-L-homocysteine + H(+). Functionally, specifically methylates the N4 position of cytidine in position 1402 (C1402) of 16S rRNA. This chain is Ribosomal RNA small subunit methyltransferase H, found in Carboxydothermus hydrogenoformans (strain ATCC BAA-161 / DSM 6008 / Z-2901).